The chain runs to 496 residues: Acyltransferase M4 (496 aa).

Residue His-163 is the Proton acceptor of the active site.

Belongs to the plant acyltransferase family. In terms of assembly, monomer.

The protein operates within secondary metabolite biosynthesis. In terms of biological role, acyltransferase; part of the gene cluster that mediates the biosynthesis of squalestatin S1 (SQS1, also known as zaragozic acid A), a heavily oxidized fungal polyketide that offers potent cholesterol lowering activity by targeting squalene synthase (SS). SQS1 is composed of a 2,8-dioxobicyclic[3.2.1]octane-3,4,5-tricarboxyclic acid core that is connected to two lipophilic polyketide arms. These initial steps feature the priming of an unusual benzoic acid starter unit onto the highly reducing polyketide synthase pks2, followed by oxaloacetate extension and product release to generate a tricarboxylic acid containing product. The phenylalanine ammonia lyase (PAL) M7 and the acyl-CoA ligase M9 are involved in transforming phenylalanine into benzoyl-CoA. The citrate synthase-like protein R3 is involved in connecting the C-alpha-carbons of the hexaketide chain and oxaloacetate to afford the tricarboxylic acid unit. The potential hydrolytic enzymes, M8 and M10, are in close proximity to pks2 and may participate in product release. On the other side, the tetraketide arm is synthesized by a the squalestatin tetraketide synthase pks1 and enzymatically esterified to the core in the last biosynthetic step, by the acetyltransferase M4. The biosynthesis of the tetraketide must involve 3 rounds of chain extension. After the first and second rounds methyl-transfer occurs, and in all rounds of extension the ketoreductase and dehydratase are active. The enoyl reductase and C-MeT of pks1 are not active in the final round of extension. The acetyltransferase M4 appears to have a broad substrate selectivity for its acyl CoA substrate, allowing the in vitro synthesis of novel squalestatins. The biosynthesis of SQS1 requires several oxidative steps likely performed by oxidoreductases M1, R1 and R2. Finally, in support of the identification of the cluster as being responsible for SQS1 production, the cluster contains a gene encoding a putative squalene synthase (SS) R6, suggesting a likely mechanism for self-resistance. This is Acyltransferase M4 from Phoma sp. (strain ATCC 20986 / MF5453).